The primary structure comprises 126 residues: Profilin-3 (126 aa).

Belongs to the profilin family. Occurs in many kinds of cells as a complex with monomeric actin in a 1:1 ratio.

Its subcellular location is the cytoplasm. It is found in the cytoskeleton. Its function is as follows. Binds to actin and affects the structure of the cytoskeleton. At high concentrations, profilin prevents the polymerization of actin, whereas it enhances it at low concentrations. By binding to PIP2, it inhibits the formation of IP3 and DG. The protein is Profilin-3 (proC) of Dictyostelium discoideum (Social amoeba).